The following is a 278-amino-acid chain: Probable velvet family sexual development regulator SCHCODRAFT_28806 (278 aa).

Residues 51-255 (GRTIRASLDE…ARVGVRLSVR (205 aa)) form the Velvet domain. Residues 257–278 (TGKKATTKRRKRSDSFDEDDSS) are disordered.

This sequence belongs to the velvet family.

It is found in the nucleus. Velvet-domain-containing protein that probably acts as a positive regulator of sexual development. In Schizophyllum commune (strain H4-8 / FGSC 9210) (Split gill fungus), this protein is Probable velvet family sexual development regulator SCHCODRAFT_28806.